The chain runs to 169 residues: Peptide methionine sulfoxide reductase MsrA (169 aa).

Residue cysteine 10 is part of the active site.

The protein belongs to the MsrA Met sulfoxide reductase family.

The enzyme catalyses L-methionyl-[protein] + [thioredoxin]-disulfide + H2O = L-methionyl-(S)-S-oxide-[protein] + [thioredoxin]-dithiol. It carries out the reaction [thioredoxin]-disulfide + L-methionine + H2O = L-methionine (S)-S-oxide + [thioredoxin]-dithiol. Has an important function as a repair enzyme for proteins that have been inactivated by oxidation. Catalyzes the reversible oxidation-reduction of methionine sulfoxide in proteins to methionine. The polypeptide is Peptide methionine sulfoxide reductase MsrA (Streptococcus pyogenes serotype M2 (strain MGAS10270)).